Here is a 185-residue protein sequence, read N- to C-terminus: Ribosome-recycling factor (185 aa).

The protein belongs to the RRF family.

The protein resides in the cytoplasm. Its function is as follows. Responsible for the release of ribosomes from messenger RNA at the termination of protein biosynthesis. May increase the efficiency of translation by recycling ribosomes from one round of translation to another. The protein is Ribosome-recycling factor of Dehalococcoides mccartyi (strain ATCC BAA-2266 / KCTC 15142 / 195) (Dehalococcoides ethenogenes (strain 195)).